A 710-amino-acid chain; its full sequence is Polyribonucleotide nucleotidyltransferase (710 aa).

Residues Asp-489 and Asp-495 each contribute to the Mg(2+) site. The 60-residue stretch at 556–615 (PKIDTIKIDVDKIKVVIGKGGETIDKIIAETGVKIDIDDEGNVSIYSSDQAAIDRTKEII) folds into the KH domain. An S1 motif domain is found at 625–693 (GEVYHAKVVR…EKGRVDASMK (69 aa)). Residues 691 to 710 (SMKALIPRPPKPEKKEEKHD) are disordered. Residues 700–710 (PKPEKKEEKHD) are compositionally biased toward basic and acidic residues.

Belongs to the polyribonucleotide nucleotidyltransferase family. Mg(2+) serves as cofactor.

The protein resides in the cytoplasm. The catalysed reaction is RNA(n+1) + phosphate = RNA(n) + a ribonucleoside 5'-diphosphate. Functionally, involved in mRNA degradation. Catalyzes the phosphorolysis of single-stranded polyribonucleotides processively in the 3'- to 5'-direction. The polypeptide is Polyribonucleotide nucleotidyltransferase (Streptococcus pyogenes serotype M1).